Reading from the N-terminus, the 263-residue chain is Dihydropteroate synthase type-3 (263 aa).

The Pterin-binding domain maps to 2 to 257 (SKIFGIVNIT…DVKSLSDALK (256 aa)). Asn9 is a binding site for Mg(2+). Ser49 contributes to the 4-aminobenzoate binding site. 3 residues coordinate (7,8-dihydropterin-6-yl)methyl diphosphate: Asp82, Asn101, and Asp172. Asn101 and Asp172 together coordinate 6-hydroxymethyl-7,8-dihydropterin. Phe177 contacts 4-aminobenzoate. Residue Lys211 participates in (7,8-dihydropterin-6-yl)methyl diphosphate binding. Lys211 lines the 6-hydroxymethyl-7,8-dihydropterin pocket. Residue Ser212 participates in 4-aminobenzoate binding. 245-247 (RTH) is a (7,8-dihydropterin-6-yl)methyl diphosphate binding site.

It belongs to the DHPS family. The cofactor is Mg(2+).

It carries out the reaction (7,8-dihydropterin-6-yl)methyl diphosphate + 4-aminobenzoate = 7,8-dihydropteroate + diphosphate. It functions in the pathway cofactor biosynthesis; tetrahydrofolate biosynthesis; 7,8-dihydrofolate from 2-amino-4-hydroxy-6-hydroxymethyl-7,8-dihydropteridine diphosphate and 4-aminobenzoate: step 1/2. Its function is as follows. Catalyzes the condensation of para-aminobenzoate (pABA) with 6-hydroxymethyl-7,8-dihydropterin diphosphate (DHPt-PP) to form 7,8-dihydropteroate (H2Pte), the immediate precursor of folate derivatives. Confers resistance to sulfonamide antibiotics, including sulfamethoxazole (SMX), sulfadiazine and sulfisoxazole. The chain is Dihydropteroate synthase type-3 from Escherichia coli.